Here is a 925-residue protein sequence, read N- to C-terminus: Probable dipeptidyl-aminopeptidase B (925 aa).

The tract at residues 1–104 (MTPYRDVPPV…RHAQKKGPGM (104 aa)) is disordered. Topologically, residues 1-110 (MTPYRDVPPV…GPGMDRGMRR (110 aa)) are cytoplasmic. Residues 31-40 (ESGSSVSTTS) are compositionally biased toward low complexity. Basic and acidic residues predominate over residues 55 to 72 (LSEKQPRGDDNEDALKDE). Residues 111–131 (ALLIAAGLLVSAWVAGLFVYI) form a helical; Signal-anchor for type II membrane protein membrane-spanning segment. Residues 132–925 (ATKSYKPASA…PKPNGKRRAA (794 aa)) lie on the Vacuolar side of the membrane. Asn-369 carries an N-linked (GlcNAc...) asparagine glycan. Catalysis depends on Ser-773, which acts as the Charge relay system. N-linked (GlcNAc...) asparagine glycosylation occurs at Asn-832. Catalysis depends on charge relay system residues Asp-850 and His-883.

This sequence belongs to the peptidase S9B family.

It localises to the vacuole membrane. The enzyme catalyses Release of an N-terminal dipeptide, Xaa-Yaa-|-Zaa-, from a polypeptide, preferentially when Yaa is Pro, provided Zaa is neither Pro nor hydroxyproline.. Type IV dipeptidyl-peptidase which removes N-terminal dipeptides sequentially from polypeptides having unsubstituted N-termini provided that the penultimate residue is proline. This chain is Probable dipeptidyl-aminopeptidase B (DAPB), found in Chaetomium globosum (strain ATCC 6205 / CBS 148.51 / DSM 1962 / NBRC 6347 / NRRL 1970) (Soil fungus).